The following is a 94-amino-acid chain: Acylphosphatase (94 aa).

The region spanning 5 to 94 (RLTAFVHGHV…PRDVEGFVER (90 aa)) is the Acylphosphatase-like domain. Residues Arg-20 and Asn-38 contribute to the active site.

It belongs to the acylphosphatase family.

The enzyme catalyses an acyl phosphate + H2O = a carboxylate + phosphate + H(+). In Corynebacterium glutamicum (strain R), this protein is Acylphosphatase (acyP).